The following is a 384-amino-acid chain: S-adenosylmethionine synthase (384 aa).

An ATP-binding site is contributed by His15. Mg(2+) is bound at residue Asp17. Residue Glu43 coordinates K(+). Positions 56 and 99 each coordinate L-methionine. Residues 99–109 (QSPDINQGVDR) are flexible loop. ATP-binding positions include 164–166 (DAK), 230–231 (RF), Asp239, 245–246 (RK), Ala262, and Lys266. Asp239 contacts L-methionine. Lys270 lines the L-methionine pocket.

Belongs to the AdoMet synthase family. In terms of assembly, homotetramer; dimer of dimers. The cofactor is Mg(2+). K(+) serves as cofactor.

It is found in the cytoplasm. The enzyme catalyses L-methionine + ATP + H2O = S-adenosyl-L-methionine + phosphate + diphosphate. Its pathway is amino-acid biosynthesis; S-adenosyl-L-methionine biosynthesis; S-adenosyl-L-methionine from L-methionine: step 1/1. Catalyzes the formation of S-adenosylmethionine (AdoMet) from methionine and ATP. The overall synthetic reaction is composed of two sequential steps, AdoMet formation and the subsequent tripolyphosphate hydrolysis which occurs prior to release of AdoMet from the enzyme. The polypeptide is S-adenosylmethionine synthase (Escherichia fergusonii (strain ATCC 35469 / DSM 13698 / CCUG 18766 / IAM 14443 / JCM 21226 / LMG 7866 / NBRC 102419 / NCTC 12128 / CDC 0568-73)).